Reading from the N-terminus, the 496-residue chain is Cytochrome P450 71B14 (496 aa).

A helical transmembrane segment spans residues 1–21 (MIWWFIVGASFFFAFILIAKD). Residue C436 participates in heme binding.

This sequence belongs to the cytochrome P450 family. Requires heme as cofactor.

Its subcellular location is the membrane. In Arabidopsis thaliana (Mouse-ear cress), this protein is Cytochrome P450 71B14 (CYP71B14).